A 1132-amino-acid polypeptide reads, in one-letter code: Mediator of RNA polymerase II transcription subunit 5 (1132 aa).

Positions 998–1023 (KGDVDIKGEDLHEKNDSAEVRQETQP) are enriched in basic and acidic residues. Residues 998-1070 (KGDVDIKGED…RTNNVPMIKA (73 aa)) form a disordered region. A compositionally biased stretch (acidic residues) spans 1047 to 1057 (YEEEEENEDND).

Belongs to the Mediator complex subunit 5 family. As to quaternary structure, component of the Mediator complex, which is composed of at least 21 subunits that form three structurally distinct submodules. The Mediator head module contains MED6, MED8, MED11, SRB4/MED17, SRB5/MED18, ROX3/MED19, SRB2/MED20 and SRB6/MED22, the middle module contains MED1, MED4, NUT1/MED5, MED7, CSE2/MED9, NUT2/MED10, SRB7/MED21 and SOH1/MED31, and the tail module contains MED2, PGD1/MED3, RGR1/MED14, GAL11/MED15 and SIN4/MED16. The head and the middle modules interact directly with RNA polymerase II, whereas the elongated tail module interacts with gene-specific regulatory proteins.

It is found in the nucleus. In terms of biological role, component of the Mediator complex, a coactivator involved in the regulated transcription of nearly all RNA polymerase II-dependent genes. Mediator functions as a bridge to convey information from gene-specific regulatory proteins to the basal RNA polymerase II transcription machinery. The Mediator complex, having a compact conformation in its free form, is recruited to promoters by direct interactions with regulatory proteins and serves for the assembly of a functional preinitiation complex with RNA polymerase II and the general transcription factors. The Mediator complex unfolds to an extended conformation and partially surrounds RNA polymerase II, specifically interacting with the unphosphorylated form of the C-terminal domain (CTD) of RNA polymerase II. The Mediator complex dissociates from the RNA polymerase II holoenzyme and stays at the promoter when transcriptional elongation begins. This Saccharomyces cerevisiae (strain ATCC 204508 / S288c) (Baker's yeast) protein is Mediator of RNA polymerase II transcription subunit 5 (NUT1).